Consider the following 155-residue polypeptide: Ribosome maturation factor RimP (155 aa).

The protein belongs to the RimP family.

The protein localises to the cytoplasm. In terms of biological role, required for maturation of 30S ribosomal subunits. The polypeptide is Ribosome maturation factor RimP (Exiguobacterium sibiricum (strain DSM 17290 / CCUG 55495 / CIP 109462 / JCM 13490 / 255-15)).